A 121-amino-acid polypeptide reads, in one-letter code: Large ribosomal subunit protein uL22 (121 aa).

Belongs to the universal ribosomal protein uL22 family. As to quaternary structure, part of the 50S ribosomal subunit.

Its function is as follows. This protein binds specifically to 23S rRNA; its binding is stimulated by other ribosomal proteins, e.g. L4, L17, and L20. It is important during the early stages of 50S assembly. It makes multiple contacts with different domains of the 23S rRNA in the assembled 50S subunit and ribosome. The globular domain of the protein is located near the polypeptide exit tunnel on the outside of the subunit, while an extended beta-hairpin is found that lines the wall of the exit tunnel in the center of the 70S ribosome. In Salinibacter ruber (strain DSM 13855 / M31), this protein is Large ribosomal subunit protein uL22.